The primary structure comprises 262 residues: Tryptophan synthase alpha chain (262 aa).

Residues Glu48 and Asp59 each act as proton acceptor in the active site.

The protein belongs to the TrpA family. As to quaternary structure, tetramer of two alpha and two beta chains.

It catalyses the reaction (1S,2R)-1-C-(indol-3-yl)glycerol 3-phosphate + L-serine = D-glyceraldehyde 3-phosphate + L-tryptophan + H2O. It participates in amino-acid biosynthesis; L-tryptophan biosynthesis; L-tryptophan from chorismate: step 5/5. Its function is as follows. The alpha subunit is responsible for the aldol cleavage of indoleglycerol phosphate to indole and glyceraldehyde 3-phosphate. This chain is Tryptophan synthase alpha chain, found in Helicobacter pylori (strain G27).